Here is a 95-residue protein sequence, read N- to C-terminus: Aspartyl/glutamyl-tRNA(Asn/Gln) amidotransferase subunit C (95 aa).

The protein belongs to the GatC family. As to quaternary structure, heterotrimer of A, B and C subunits.

It carries out the reaction L-glutamyl-tRNA(Gln) + L-glutamine + ATP + H2O = L-glutaminyl-tRNA(Gln) + L-glutamate + ADP + phosphate + H(+). The catalysed reaction is L-aspartyl-tRNA(Asn) + L-glutamine + ATP + H2O = L-asparaginyl-tRNA(Asn) + L-glutamate + ADP + phosphate + 2 H(+). Functionally, allows the formation of correctly charged Asn-tRNA(Asn) or Gln-tRNA(Gln) through the transamidation of misacylated Asp-tRNA(Asn) or Glu-tRNA(Gln) in organisms which lack either or both of asparaginyl-tRNA or glutaminyl-tRNA synthetases. The reaction takes place in the presence of glutamine and ATP through an activated phospho-Asp-tRNA(Asn) or phospho-Glu-tRNA(Gln). The sequence is that of Aspartyl/glutamyl-tRNA(Asn/Gln) amidotransferase subunit C from Pseudomonas putida (strain ATCC 700007 / DSM 6899 / JCM 31910 / BCRC 17059 / LMG 24140 / F1).